The following is a 199-amino-acid chain: Phosphatidylethanolamine N-methyltransferase (199 aa).

Over 1-12 (MSWLLGYMDPTE) the chain is Lumenal. Positions 13 to 33 (PSFVAAVITIVFNPLFWNVVA) form an intramembrane region, helical. The Lumenal portion of the chain corresponds to 34 to 45 (RWEQRTRKLSRA). The chain crosses the membrane as a helical span at residues 46-66 (FGSPHLACYSLGICILLLNIL). Residues 67 to 93 (RSHCFTQAMMSQPKMEGLDNHTTYFLG) lie on the Cytoplasmic side of the membrane. Residues 94–114 (LAFLGWGFVFVLSSFYALGFT) traverse the membrane as a helical segment. 98–100 (GWG) serves as a coordination point for S-adenosyl-L-methionine. Over 115–157 (GTFLGDYFGILKESRVTTFPFSVLDNPMYWGSTANYLGWALMH) the chain is Lumenal. Residues 158–178 (ASPTGLLLTVLVAIVYVVALL) form a helical membrane-spanning segment. Over 179 to 199 (YEEPFTAEIYRQKATRLHKRS) the chain is Cytoplasmic. Residue 180-181 (EE) participates in S-adenosyl-L-methionine binding.

This sequence belongs to the class VI-like SAM-binding methyltransferase superfamily. PEMT/PEM2 methyltransferase family. In terms of tissue distribution, expressed in liver (at protein level).

The protein localises to the endoplasmic reticulum membrane. It localises to the mitochondrion membrane. It carries out the reaction a 1,2-diacyl-sn-glycero-3-phospho-N-methylethanolamine + S-adenosyl-L-methionine = a 1,2-diacyl-sn-glycero-3-phospho-N,N-dimethylethanolamine + S-adenosyl-L-homocysteine + H(+). The enzyme catalyses a 1,2-diacyl-sn-glycero-3-phospho-N,N-dimethylethanolamine + S-adenosyl-L-methionine = a 1,2-diacyl-sn-glycero-3-phosphocholine + S-adenosyl-L-homocysteine + H(+). It catalyses the reaction a 1,2-diacyl-sn-glycero-3-phosphoethanolamine + S-adenosyl-L-methionine = a 1,2-diacyl-sn-glycero-3-phospho-N-methylethanolamine + S-adenosyl-L-homocysteine + H(+). The catalysed reaction is 1,2-di-(9Z-octadecenoyl)-sn-glycero-3-phosphoethanolamine + S-adenosyl-L-methionine = 1,2-di-(9Z-octadecenoyl)-sn-glycero-3-phospho-N-methylethanolamine + S-adenosyl-L-homocysteine + H(+). It carries out the reaction 1,2-di-(9Z-octadecenoyl)-sn-glycero-3-phospho-N-methylethanolamine + S-adenosyl-L-methionine = 1,2-di-(9Z-octadecenoyl)-sn-glycero-3-phospho-N,N-dimethylethanolamine + S-adenosyl-L-homocysteine + H(+). The enzyme catalyses 1,2-di-(9Z-octadecenoyl)-sn-glycero-3-phospho-N,N-dimethylethanolamine + S-adenosyl-L-methionine = 1,2-di-(9Z-octadecenoyl)-sn-glycero-3-phosphocholine + S-adenosyl-L-homocysteine + H(+). It catalyses the reaction 1,2-di-(9Z,12Z-octadecadienoyl)-sn-glycero-3-phosphoethanolamine + S-adenosyl-L-methionine = 1,2-di-(9Z,12Z-octadecadienoyl)-sn-glycero-3-phospho-N-methylethanolamine + S-adenosyl-L-homocysteine + H(+). The catalysed reaction is 1,2-di-(9Z,12Z-octadecadienoyl)-sn-glycero-3-phospho-N-methylethanolamine + S-adenosyl-L-methionine = 1,2-di-(9Z,12Z-octadecadienoyl)-sn-glycero-3-phospho-N,N-dimethylethanolamine + S-adenosyl-L-homocysteine + H(+). It carries out the reaction 1,2-di-(9Z,12Z-octadecadienoyl)-sn-glycero-3-phospho-N,N-dimethylethanolamine + S-adenosyl-L-methionine = 1,2-di-(9Z,12Z-octadecadienoyl)-sn-glycero-3-phosphocholine + S-adenosyl-L-homocysteine + H(+). The enzyme catalyses 1,2-di-(9Z,12Z,15Z-octadecatrienoyl)-sn-glycero-3-phosphoethanolamine + S-adenosyl-L-methionine = 1,2-di-(9Z,12Z,15Z-octadecatrienoyl)-sn-glycero-3-phospho-N-methylethanolamine + S-adenosyl-L-homocysteine + H(+). It catalyses the reaction 1,2-di-(9Z,12Z,15Z-octadecatrienoyl)-sn-glycero-3-phospho-N-methylethanolamine + S-adenosyl-L-methionine = 1,2-di-(9Z,12Z,15Z-octadecatrienoyl)-sn-glycero-3-phospho-N,N-dimethylethanolamine + S-adenosyl-L-homocysteine + H(+). The catalysed reaction is 1,2-di-(9Z,12Z,15Z-octadecatrienoyl)-sn-glycero-3-phospho-N,N-dimethylethanolamine + S-adenosyl-L-methionine = 1,2-di-(9Z,12Z,15Z-octadecatrienoyl)-sn-glycero-3-phosphocholine + S-adenosyl-L-homocysteine + H(+). It carries out the reaction 1-hexadecanoyl-2-(4Z,7Z,10Z,13Z,16Z,19Z-docosahexaenoyl)-sn-glycero-3-phosphoethanolamine + S-adenosyl-L-methionine = 1-hexadecanoyl-2-(4Z,7Z,10Z,13Z,16Z,19Z-docosahexaenoyl)-sn-glycero-3-phospho-N-methylethanolamine + S-adenosyl-L-homocysteine + H(+). The enzyme catalyses 1-hexadecanoyl-2-(4Z,7Z,10Z,13Z,16Z,19Z-docosahexaenoyl)-sn-glycero-3-phospho-N-methylethanolamine + S-adenosyl-L-methionine = 1-hexadecanoyl-2-(4Z,7Z,10Z,13Z,16Z,19Z-docosahexaenoyl)-sn-glycero-3-phospho-N,N-dimethylethanolamine + S-adenosyl-L-homocysteine + H(+). It catalyses the reaction 1-hexadecanoyl-2-(4Z,7Z,10Z,13Z,16Z,19Z-docosahexaenoyl)-sn-glycero-3-phospho-N,N-dimethylethanolamine + S-adenosyl-L-methionine = 1-hexadecanoyl-2-(4Z,7Z,10Z,13Z,16Z,19Z-docosahexaenoyl)-sn-glycero-3-phosphocholine + S-adenosyl-L-homocysteine + H(+). It functions in the pathway phospholipid metabolism; phosphatidylcholine biosynthesis. Catalyzes the three sequential steps of the methylation pathway for the biosynthesis of phosphatidylcholine, a critical and essential component for membrane structure. Uses S-adenosylmethionine (S-adenosyl-L-methionine, SAM or AdoMet) as the methyl group donor for the methylation of phosphatidylethanolamine (1,2-diacyl-sn-glycero-3-phosphoethanolamine, PE) to phosphatidylmonomethylethanolamine (1,2-diacyl-sn-glycero-3-phospho-N-methylethanolamine, PMME), PMME to phosphatidyldimethylethanolamine (1,2-diacyl-sn-glycero-3-phospho-N,N-dimethylethanolamine, PDME), and PDME to phosphatidylcholine (1,2-diacyl-sn-glycero-3-phosphocholine, PC), producing S-adenosyl-L-homocysteine in each step. This chain is Phosphatidylethanolamine N-methyltransferase, found in Mus musculus (Mouse).